A 232-amino-acid chain; its full sequence is 2-C-methyl-D-erythritol 4-phosphate cytidylyltransferase (232 aa).

It belongs to the IspD/TarI cytidylyltransferase family. IspD subfamily.

It catalyses the reaction 2-C-methyl-D-erythritol 4-phosphate + CTP + H(+) = 4-CDP-2-C-methyl-D-erythritol + diphosphate. It participates in isoprenoid biosynthesis; isopentenyl diphosphate biosynthesis via DXP pathway; isopentenyl diphosphate from 1-deoxy-D-xylulose 5-phosphate: step 2/6. Functionally, catalyzes the formation of 4-diphosphocytidyl-2-C-methyl-D-erythritol from CTP and 2-C-methyl-D-erythritol 4-phosphate (MEP). This Stenotrophomonas maltophilia (strain R551-3) protein is 2-C-methyl-D-erythritol 4-phosphate cytidylyltransferase.